We begin with the raw amino-acid sequence, 473 residues long: Cysteine--tRNA ligase (473 aa).

Cys29 serves as a coordination point for Zn(2+). The short motif at 31–41 is the 'HIGH' region element; sequence PTVYDRAHLGN. Zn(2+) contacts are provided by Cys225, His250, and Glu254. The 'KMSKS' region signature appears at 281–285; sequence KMSKS. Position 284 (Lys284) interacts with ATP.

The protein belongs to the class-I aminoacyl-tRNA synthetase family. In terms of assembly, monomer. Zn(2+) is required as a cofactor.

Its subcellular location is the cytoplasm. The catalysed reaction is tRNA(Cys) + L-cysteine + ATP = L-cysteinyl-tRNA(Cys) + AMP + diphosphate. This Roseobacter denitrificans (strain ATCC 33942 / OCh 114) (Erythrobacter sp. (strain OCh 114)) protein is Cysteine--tRNA ligase.